The primary structure comprises 257 residues: Adenosylcobinamide-GDP ribazoletransferase (257 aa).

The next 4 membrane-spanning stretches (helical) occupy residues 28-48 (FARSPWTFPVVGYLVGGLVAL), 50-70 (LFVPAPAPTVALAFVLAVYAV), 110-130 (VALALVVLGLATAALGLVEVA), and 199-219 (WPQVLPGLAALLVALATAALV).

Belongs to the CobS family. Requires Mg(2+) as cofactor.

The protein resides in the cell membrane. It carries out the reaction alpha-ribazole + adenosylcob(III)inamide-GDP = adenosylcob(III)alamin + GMP + H(+). It catalyses the reaction alpha-ribazole 5'-phosphate + adenosylcob(III)inamide-GDP = adenosylcob(III)alamin 5'-phosphate + GMP + H(+). The protein operates within cofactor biosynthesis; adenosylcobalamin biosynthesis; adenosylcobalamin from cob(II)yrinate a,c-diamide: step 7/7. Its function is as follows. Joins adenosylcobinamide-GDP and alpha-ribazole to generate adenosylcobalamin (Ado-cobalamin). Also synthesizes adenosylcobalamin 5'-phosphate from adenosylcobinamide-GDP and alpha-ribazole 5'-phosphate. The polypeptide is Adenosylcobinamide-GDP ribazoletransferase (Halorubrum lacusprofundi (strain ATCC 49239 / DSM 5036 / JCM 8891 / ACAM 34)).